A 129-amino-acid polypeptide reads, in one-letter code: UPF0102 protein Cag_1992 (129 aa).

It belongs to the UPF0102 family.

The protein is UPF0102 protein Cag_1992 of Chlorobium chlorochromatii (strain CaD3).